Reading from the N-terminus, the 313-residue chain is Protoheme IX farnesyltransferase (313 aa).

The next 9 helical transmembrane spans lie at 35-55, 56-76, 98-118, 120-140, 153-173, 180-200, 226-246, 248-268, and 292-312; these read LVVF…HPVL, AATS…LNMW, VSSP…VATL, VLVN…YAVV, IVIG…AATG, IILF…LALF, ILLY…LGYF, AAYG…AFNV, and LFLL…AAMI.

Belongs to the UbiA prenyltransferase family. Protoheme IX farnesyltransferase subfamily.

Its subcellular location is the cell inner membrane. It carries out the reaction heme b + (2E,6E)-farnesyl diphosphate + H2O = Fe(II)-heme o + diphosphate. Its pathway is porphyrin-containing compound metabolism; heme O biosynthesis; heme O from protoheme: step 1/1. Converts heme B (protoheme IX) to heme O by substitution of the vinyl group on carbon 2 of heme B porphyrin ring with a hydroxyethyl farnesyl side group. The polypeptide is Protoheme IX farnesyltransferase (Afipia carboxidovorans (strain ATCC 49405 / DSM 1227 / KCTC 32145 / OM5) (Oligotropha carboxidovorans)).